We begin with the raw amino-acid sequence, 827 residues long: WD repeat-containing protein 27 (827 aa).

WD repeat units follow at residues 3 to 57, 62 to 101, 112 to 151, 155 to 194, 201 to 237, 292 to 337, 344 to 387, 502 to 542, 546 to 584, 590 to 629, 646 to 687, 698 to 740, 746 to 784, and 788 to 826; these read NPQD…IWNT, HQLLILRGHHQPITAMAFGNKVNPLLICSASLDYVIMWNL, LVPRGTVMGSLLGKVLCLQLSLDDHVVAVCAGNKIFMLDI, AVRAELQGHLGPVTAVEFCPWRAGTLISASEDRGFKVWDH, YSSSVLSAYPLLSLFIDAESRQLVTGCADGQLWIFSL, FPVL…LANL, YYKD…VLEI, KPGP…VFDA, GTPAVFSGHDGAVNAVCWSQDRRWLLSAARDGTLRMWSA, ALLLGKDMFSKPIQSAQFYYIDAFILLSSGPEFQLLRYHI, KLIC…VFDL, EAHS…LWDL, ERHFEGHPTRGYPCGIAFSPCGRFAACGAEDRHAYVYEM, and TFSHRLAGHTDTVTGVAFNPSAPQLATATLDGKLQLFLA.

This is WD repeat-containing protein 27 (WDR27) from Homo sapiens (Human).